The following is a 387-amino-acid chain: Ferrochelatase (387 aa).

Residues histidine 196 and glutamate 277 each coordinate Fe cation.

The protein belongs to the ferrochelatase family.

It is found in the cytoplasm. It carries out the reaction heme b + 2 H(+) = protoporphyrin IX + Fe(2+). It functions in the pathway porphyrin-containing compound metabolism; protoheme biosynthesis; protoheme from protoporphyrin-IX: step 1/1. Catalyzes the ferrous insertion into protoporphyrin IX. The polypeptide is Ferrochelatase (Trichodesmium erythraeum (strain IMS101)).